We begin with the raw amino-acid sequence, 95 residues long: MEIPLINGFYFYVLRCADNTLYGGYTINLINRVERHNKGQGAKYTKARRPVQLIYFESFDNQHDAMSAEYQFKQRTRSSKIKFLKKNGISLTNLK.

Residues 7–82 enclose the GIY-YIG domain; sequence NGFYFYVLRC…KQRTRSSKIK (76 aa).

This sequence belongs to the UPF0213 family.

This Pediococcus pentosaceus (strain ATCC 25745 / CCUG 21536 / LMG 10740 / 183-1w) protein is UPF0213 protein PEPE_0875.